A 554-amino-acid chain; its full sequence is Glucose-6-phosphate isomerase (554 aa).

Catalysis depends on E359, which acts as the Proton donor. Residues H390 and K518 contribute to the active site.

The protein belongs to the GPI family.

The protein localises to the cytoplasm. The enzyme catalyses alpha-D-glucose 6-phosphate = beta-D-fructose 6-phosphate. The protein operates within carbohydrate biosynthesis; gluconeogenesis. Its pathway is carbohydrate degradation; glycolysis; D-glyceraldehyde 3-phosphate and glycerone phosphate from D-glucose: step 2/4. Its function is as follows. Catalyzes the reversible isomerization of glucose-6-phosphate to fructose-6-phosphate. This chain is Glucose-6-phosphate isomerase, found in Pseudomonas syringae pv. syringae (strain B728a).